The following is a 195-amino-acid chain: Sec-independent protein translocase protein TatB (195 aa).

A helical transmembrane segment spans residues 2 to 22 (FSNVGWGEVLVLLIVALFLIG). Residues 103–125 (VKDTVDTVRKPNLRESLKADKTK) show a composition bias toward basic and acidic residues. The interval 103-195 (VKDTVDTVRK…APGYGWEDVT (93 aa)) is disordered. 2 stretches are compositionally biased toward polar residues: residues 127–139 (SAQPQPSLASGSA) and 146–155 (VTQQSNAGES).

The protein belongs to the TatB family. The Tat system comprises two distinct complexes: a TatABC complex, containing multiple copies of TatA, TatB and TatC subunits, and a separate TatA complex, containing only TatA subunits. Substrates initially bind to the TatABC complex, which probably triggers association of the separate TatA complex to form the active translocon.

The protein localises to the cell membrane. Its function is as follows. Part of the twin-arginine translocation (Tat) system that transports large folded proteins containing a characteristic twin-arginine motif in their signal peptide across membranes. Together with TatC, TatB is part of a receptor directly interacting with Tat signal peptides. TatB may form an oligomeric binding site that transiently accommodates folded Tat precursor proteins before their translocation. The protein is Sec-independent protein translocase protein TatB of Corynebacterium jeikeium (strain K411).